The primary structure comprises 442 residues: Glycoprotein endo-alpha-1,2-mannosidase-like protein (442 aa).

Topologically, residues 1-8 (MNRLRRKA) are cytoplasmic. Residues 9–29 (CVALLLFTLFIFGTMMGLRTL) traverse the membrane as a helical; Signal-anchor for type II membrane protein segment. At 30–442 (KPTDGFSDLA…FSKEKEQWLM (413 aa)) the chain is on the lumenal side.

The protein belongs to the glycosyl hydrolase 99 family.

The protein localises to the golgi apparatus membrane. The sequence is that of Glycoprotein endo-alpha-1,2-mannosidase-like protein (maneal) from Danio rerio (Zebrafish).